A 671-amino-acid polypeptide reads, in one-letter code: Sodium, potassium, lithium and rubidium/H(+) antiporter (671 aa).

Helical transmembrane passes span 7–29 (VLVL…FIPV), 46–66 (GLHI…PLLF), 83–103 (PILL…GYTI), 110–130 (IPLP…VVAV), 156–176 (ASGL…AFSI), 182–202 (SFVL…FFII), 228–248 (FVIY…VVAG), 276–296 (IILF…IPDV), 315–335 (ILII…LFWA), 364–384 (GAVT…GSPF), and 389–409 (LIIF…SVLL).

It belongs to the monovalent cation:proton antiporter 1 (CPA1) transporter (TC 2.A.36) family. Nhak (TC 2.A.36.3.2) subfamily.

It is found in the cell membrane. Functionally, transporter involved in the efflux of sodium, potassium, lithium and rubidium. The sequence is that of Sodium, potassium, lithium and rubidium/H(+) antiporter (nhaK) from Bacillus pumilus (strain SAFR-032).